The sequence spans 200 residues: Small ribosomal subunit protein uS4 (200 aa).

Residues 22-42 are disordered; it reads TGKELEKRPYAPGPHGPGQRK. Residues 92–152 form the S4 RNA-binding domain; that stretch reads SRLDNIVYRL…EKSQNLSVVK (61 aa).

It belongs to the universal ribosomal protein uS4 family. As to quaternary structure, part of the 30S ribosomal subunit. Contacts protein S5. The interaction surface between S4 and S5 is involved in control of translational fidelity.

In terms of biological role, one of the primary rRNA binding proteins, it binds directly to 16S rRNA where it nucleates assembly of the body of the 30S subunit. Its function is as follows. With S5 and S12 plays an important role in translational accuracy. The sequence is that of Small ribosomal subunit protein uS4 from Bacillus licheniformis (strain ATCC 14580 / DSM 13 / JCM 2505 / CCUG 7422 / NBRC 12200 / NCIMB 9375 / NCTC 10341 / NRRL NRS-1264 / Gibson 46).